An 826-amino-acid chain; its full sequence is Copper-transporting ATPase 1 (826 aa).

HMA domains are found at residues 15–80 and 82–147; these read APTD…YEPK and IIQE…YDVR. Cu cation is bound by residues Cys26, Cys29, Cys93, and Cys96. Transmembrane regions (helical) follow at residues 172–192, 209–229, 246–266, 270–290, 429–449, and 457–477; these read LVILSAVLTLPLFLVEMGSHF, NLYIQFALATAVLFGPGLRFF, LVVLGTTAAWGYSVVATFASG, SGTANVYYEAAAVIVTLILLG, AWFVPAVILVAVLTFAAWYVF, and FALVNAVAVLIIACPCAMGLA. Asp514 (4-aspartylphosphate intermediate) is an active-site residue. Mg(2+)-binding residues include Asp713 and Asp717. The next 2 helical transmembrane spans lie at 772–792 and 795–815; these read FWAFAYNVSLVPVAAGVLYPL and TLLSPILAAAAMAMSSVFVLG.

It belongs to the cation transport ATPase (P-type) (TC 3.A.3) family. Type IB subfamily.

It is found in the cell membrane. The enzyme catalyses Cu(2+)(in) + ATP + H2O = Cu(2+)(out) + ADP + phosphate + H(+). In terms of biological role, involved in copper transport. The chain is Copper-transporting ATPase 1 (actP1) from Rhizobium meliloti (strain 1021) (Ensifer meliloti).